Consider the following 521-residue polypeptide: Envelope glycoprotein C homolog (521 aa).

The first 21 residues, 1–21 (MGPLGRAWLIAAIFAWALLSA), serve as a signal peptide directing secretion. Topologically, residues 22–475 (RRGLAEEAEA…DASPGLIGSP (454 aa)) are virion surface. A disordered region spans residues 24–138 (GLAEEAEASP…PSKAPPKERK (115 aa)). Low complexity predominate over residues 41–54 (PTETESSAGTTGAT). Over residues 66-76 (EDSTPGATTPV) the composition is skewed to polar residues. A glycan (N-linked (GlcNAc...) asparagine; by host) is linked at asparagine 111. The cysteines at positions 142 and 159 are disulfide-linked. Residues 155-227 (LYVHCGVADN…LGDNYIFPSP (73 aa)) form the Ig-like V-type domain. Asparagine 164 and asparagine 208 each carry an N-linked (GlcNAc...) asparagine; by host glycan. 3 cysteine pairs are disulfide-bonded: cysteine 290–cysteine 351, cysteine 390–cysteine 447, and cysteine 394–cysteine 421. One can recognise an Ig-like C2-type domain in the interval 386–451 (GEAVCEARCV…PVDYTCTATG (66 aa)). Residues 476 to 496 (VLVSVVAVACGLGAVGLLLVA) form a helical membrane-spanning segment. The Cytoplasmic segment spans residues 497–521 (ASCLRRKARVIQPGLTRARALGSAP).

This sequence belongs to the herpesviridae glycoprotein C family. Interacts with host complement component C3; this interaction inhibits host immune response by disregulating complement cascade.

The protein resides in the virion membrane. Its function is as follows. Essential for the initial attachment to heparan sulfate moieties of the host cell surface proteoglycans. Plays also a role in host immune evasion by inhibiting the host complement cascade activation. The chain is Envelope glycoprotein C homolog (gC) from Bovine herpesvirus 1.1 (strain Cooper) (BoHV-1).